A 283-amino-acid chain; its full sequence is Polyamine aminopropyltransferase (283 aa).

In terms of domain architecture, PABS spans 5–241 (NNWYIEHFER…GWWSVTLARK (237 aa)). Q35 lines the S-methyl-5'-thioadenosine pocket. Residues H66 and D90 each coordinate spermidine. Residues D110 and 141–142 (DG) each bind S-methyl-5'-thioadenosine. The Proton acceptor role is filled by D160. Spermidine is bound at residue 160-163 (DSTD). Residue P167 participates in S-methyl-5'-thioadenosine binding.

It belongs to the spermidine/spermine synthase family. Homodimer or homotetramer.

It is found in the cytoplasm. It catalyses the reaction S-adenosyl 3-(methylsulfanyl)propylamine + putrescine = S-methyl-5'-thioadenosine + spermidine + H(+). It participates in amine and polyamine biosynthesis; spermidine biosynthesis; spermidine from putrescine: step 1/1. Functionally, catalyzes the irreversible transfer of a propylamine group from the amino donor S-adenosylmethioninamine (decarboxy-AdoMet) to putrescine (1,4-diaminobutane) to yield spermidine. The polypeptide is Polyamine aminopropyltransferase (Stenotrophomonas maltophilia (strain R551-3)).